We begin with the raw amino-acid sequence, 1066 residues long: FHIP family protein GH13096 (1066 aa).

Over residues 1-15 (MSWLRTSPLRQSLTR) the composition is skewed to polar residues. The interval 1–33 (MSWLRTSPLRQSLTRNSGGNGSGGSGNSGNASA) is disordered. Over residues 18 to 27 (GGNGSGGSGN) the composition is skewed to gly residues. Residue Ser512 is modified to Phosphoserine. 3 disordered regions span residues 647–688 (SFKW…NSSG), 827–885 (DNSP…RSDN), and 942–1010 (SRGV…FNSE). The segment covering 658–687 (NDATTTTATSDPDVEHNNSSNHNNSSINSS) has biased composition (low complexity). Ser829 is modified (phosphoserine). Residues 836–856 (HQQQQLQHTTNSTHQQQQAQQ) are compositionally biased toward low complexity. Positions 950–963 (PRGNTCETSLSTTP) are enriched in polar residues. Low complexity predominate over residues 967 to 996 (AQATSASSTNSSIGGSTQTLSATHSSSTLH). Positions 1001 to 1010 (GPQTASFNSE) are enriched in polar residues.

It belongs to the FHIP family.

The protein is FHIP family protein GH13096 of Drosophila grimshawi (Hawaiian fruit fly).